The following is a 163-amino-acid chain: MDALEEESFALSFSSASDAEFDAVVGYLEDIIMDDEFQLLQRNFMDKYYQEFEDTEENKLTYTPIFNEYISLVEKYIEEQLLERIPGFNMAAFTTTLQHHKDEVAGDIFDMLLTFTDFLAFKEMFLDYRAEKEGRGLDLSSGLVVTSLCKSSSVPASQNNLRP.

This sequence belongs to the ARL2BP family. As to quaternary structure, interacts with GTP bound ARL2 and ARL3; the complex ARL2-ARL2BP as well as ARL2BP alone, binds to SLC25A4/ANT1. Interaction with ARL2 may be required for targeting to cilia basal body. Interacts with STAT3; interaction is enhanced with ARL2. Found in a complex with ARL2, ARL2BP and SLC25A4. Interacts with STAT2, STAT3 and STAT4. Found in a complex with ARL2BP, ARL2 and SLC25A6. Expressed in brain.

It localises to the cytoplasm. Its subcellular location is the mitochondrion intermembrane space. It is found in the cytoskeleton. The protein resides in the microtubule organizing center. The protein localises to the centrosome. It localises to the nucleus. Its subcellular location is the spindle. It is found in the cilium basal body. Together with ARL2, plays a role in the nuclear translocation, retention and transcriptional activity of STAT3. May play a role as an effector of ARL2. The protein is ADP-ribosylation factor-like protein 2-binding protein (ARL2BP) of Bos taurus (Bovine).